The following is a 419-amino-acid chain: MSAEEYIEVSSSPDIFTDDDDMITIEPELNKNPKDCNSKRKRSVTECCEIRLITSKCDFESTQQLVHHNCTGHKVHEHNLNAVDEEDFDTENLPLLFSSFSDNESDILEPDLNTRVAEDNDVLLSRYSKIKNSASCRNTFEHSAYHSNREEISSSGFYYHRKPQLFEKSLEKLGNKSIEANRSPLIKELCESANSTENVCFSVSTVDEIQQRHPSAGHSIDSTCQSNSFLEGDSATHKKKKTDNIKEFTSCEFNDRSRTLLNYAGYMDTNKNADNEAKSLKEKLENFPVEKLRAIAESYGFKSSDSKATLIKIVESCLDAIDSRSQSKKLGKETPHDYLITSTKTVLEFDDIVTQTHRAISQVVKQAKDNSVWIKILTYSAIDVEEFQLWLKRKNLNVSLDLIKSWCDKYGVLMKGSWH.

This sequence belongs to the SLX4 family. Forms a heterodimer with slx1. In terms of processing, phosphorylated in response to DNA damage.

The protein resides in the nucleus. It localises to the nucleolus. Its function is as follows. Regulatory subunit of the slx1-slx4 structure-specific endonuclease that resolves DNA secondary structures generated during DNA repair and recombination. Has endonuclease activity towards branched DNA substrates, introducing single-strand cuts in duplex DNA close to junctions with ss-DNA. Has a preference for stem-loop (SL) and splayed arm Y structures. Introduces a single-strand cut in duplex DNA on the 3' side of a double-strand/single-strand junction with respect to the single-strand moving 3' to 5' away from the junction. Plays a critical role in maintaining the integrity of the ribosomal DNA (rDNA) loci, where it has a role in re-starting stalled replication forks. The complex initiates homologous recombination (HR) events, used to maintain rDNA copy number, in the rDNA repeats that are processed by a mechanism that requires rad22, but not rhp51. Has Holliday junction resolvase activity in vitro. Slx4 is required for efficient processing of DNA substrates. This is Structure-specific endonuclease subunit slx4 from Schizosaccharomyces pombe (strain 972 / ATCC 24843) (Fission yeast).